Here is a 127-residue protein sequence, read N- to C-terminus: Small ribosomal subunit protein uS12 (127 aa).

Residues 1-28 (MPTIQQLIRDERSKAKRKTKSPALKQCP) form a disordered region. Asp-89 is subject to 3-methylthioaspartic acid. The interval 104–127 (ATGVKNRQKARSKYGTKRPKPAAK) is disordered. Residues 109 to 127 (NRQKARSKYGTKRPKPAAK) show a composition bias toward basic residues.

Belongs to the universal ribosomal protein uS12 family. Part of the 30S ribosomal subunit. Contacts proteins S8 and S17. May interact with IF1 in the 30S initiation complex.

Functionally, with S4 and S5 plays an important role in translational accuracy. Its function is as follows. Interacts with and stabilizes bases of the 16S rRNA that are involved in tRNA selection in the A site and with the mRNA backbone. Located at the interface of the 30S and 50S subunits, it traverses the body of the 30S subunit contacting proteins on the other side and probably holding the rRNA structure together. The combined cluster of proteins S8, S12 and S17 appears to hold together the shoulder and platform of the 30S subunit. This Microcystis aeruginosa (strain NIES-843 / IAM M-2473) protein is Small ribosomal subunit protein uS12.